The sequence spans 357 residues: MDQLFASIHATGQSLLGYYWPLVWNLVKIIAVVAPLMGAVAYLTLWERKVIGWMHVRHGPNRTGPAGLLQPIADGVKLLLKEIVVPAKSSKALFVIAPIMTIMPALAAWAVIPFGPETVLADVNAGLLFVMAITSLEVYGVIVAGWASNSKYAFLGAMRASAQMISYEIAMGFVLVIILMVTGSMNLTTIVNTQNTGRFAEMGLTFLSWNWLPLLPMFFIYIISGTAELNRHPFDVVEGESEIVAGHMVEYSGMSFAMFFLAEYANMWLISIMATLMFLGGWTSPIDMAPFTWVPGWIWLGLKTLMVVTMFIWFRASFPRYRYDQIMRLGWKVFIPLTLVYLLIVAIWMKTPWNIWN.

A run of 8 helical transmembrane segments spans residues 26–46 (LVKI…LTLW), 92–112 (ALFV…WAVI), 127–147 (LLFV…AGWA), 164–184 (MISY…VTGS), 203–223 (GLTF…IYII), 259–279 (FFLA…LMFL), 294–314 (VPGW…FIWF), and 329–349 (LGWK…AIWM).

Belongs to the complex I subunit 1 family. As to quaternary structure, NDH-1 is composed of 14 different subunits. Subunits NuoA, H, J, K, L, M, N constitute the membrane sector of the complex.

The protein resides in the cell inner membrane. The enzyme catalyses a quinone + NADH + 5 H(+)(in) = a quinol + NAD(+) + 4 H(+)(out). NDH-1 shuttles electrons from NADH, via FMN and iron-sulfur (Fe-S) centers, to quinones in the respiratory chain. The immediate electron acceptor for the enzyme in this species is believed to be ubiquinone. Couples the redox reaction to proton translocation (for every two electrons transferred, four hydrogen ions are translocated across the cytoplasmic membrane), and thus conserves the redox energy in a proton gradient. This subunit may bind ubiquinone. This Janthinobacterium sp. (strain Marseille) (Minibacterium massiliensis) protein is NADH-quinone oxidoreductase subunit H.